The following is a 141-amino-acid chain: Hemoglobin subunit alpha (141 aa).

Residues 1 to 141 enclose the Globin domain; the sequence is VLSSADKNNV…VSTVLTSKYR (141 aa). S3 carries the post-translational modification Phosphoserine. 2 positions are modified to N6-succinyllysine: K7 and K11. K16 is modified (N6-acetyllysine; alternate). At K16 the chain carries N6-succinyllysine; alternate. The residue at position 24 (Y24) is a Phosphotyrosine. Phosphoserine is present on S35. At K40 the chain carries N6-succinyllysine. Position 49 is a phosphoserine (S49). H58 lines the O2 pocket. H87 serves as a coordination point for heme b. S102 carries the phosphoserine modification. Residue T108 is modified to Phosphothreonine. A Phosphoserine modification is found at S124. Residues T134 and T137 each carry the phosphothreonine modification. S138 carries the post-translational modification Phosphoserine.

The protein belongs to the globin family. As to quaternary structure, heterotetramer of two alpha chains and two beta chains. As to expression, red blood cells.

Its function is as follows. Involved in oxygen transport from the lung to the various peripheral tissues. In terms of biological role, hemopressin acts as an antagonist peptide of the cannabinoid receptor CNR1. Hemopressin-binding efficiently blocks cannabinoid receptor CNR1 and subsequent signaling. The sequence is that of Hemoglobin subunit alpha (HBA) from Panthera pardus saxicolor (Northern Persian leopard).